The primary structure comprises 167 residues: Leukotoxin-activating lysine-acyltransferase LktC serotype T3 (167 aa).

Residues His22 and Asp91 contribute to the active site.

Belongs to the RTX toxin acyltransferase family.

It localises to the cytoplasm. It carries out the reaction a fatty acyl-[ACP] + L-lysyl-[protein] = N(6)-(fatty acyl)-L-lysyl-[protein] + holo-[ACP] + H(+). Functionally, involved in fatty acylation of the protoxin (LktA) at two internal lysine residues, thereby converting it to the active toxin. This is Leukotoxin-activating lysine-acyltransferase LktC serotype T3 (lktC) from Mannheimia haemolytica (Pasteurella haemolytica).